A 163-amino-acid chain; its full sequence is Acetolactate synthase isozyme 3 small subunit (163 aa).

Residues 4–78 (ILSVLLENES…DVLRVSELGQ (75 aa)) form the ACT domain.

It belongs to the acetolactate synthase small subunit family. In terms of assembly, dimer of large and small chains.

It carries out the reaction 2 pyruvate + H(+) = (2S)-2-acetolactate + CO2. It functions in the pathway amino-acid biosynthesis; L-isoleucine biosynthesis; L-isoleucine from 2-oxobutanoate: step 1/4. The protein operates within amino-acid biosynthesis; L-valine biosynthesis; L-valine from pyruvate: step 1/4. Sensitive to valine inhibition. The protein is Acetolactate synthase isozyme 3 small subunit (ilvH) of Escherichia coli (strain K12).